The primary structure comprises 369 residues: Peptide chain release factor 2 (369 aa).

Glutamine 250 carries the post-translational modification N5-methylglutamine.

This sequence belongs to the prokaryotic/mitochondrial release factor family. Methylated by PrmC. Methylation increases the termination efficiency of RF2.

Its subcellular location is the cytoplasm. In terms of biological role, peptide chain release factor 2 directs the termination of translation in response to the peptide chain termination codons UGA and UAA. This Rickettsia typhi (strain ATCC VR-144 / Wilmington) protein is Peptide chain release factor 2 (prfB).